Here is a 405-residue protein sequence, read N- to C-terminus: L-carnitine CoA-transferase (405 aa).

The CoA site is built by Lys-97 and Arg-104. Asp-169 (nucleophile) is an active-site residue.

Belongs to the CoA-transferase III family. CaiB subfamily. In terms of assembly, homodimer.

The protein localises to the cytoplasm. It catalyses the reaction crotonobetainyl-CoA + (R)-carnitine = crotonobetaine + (R)-carnitinyl-CoA. It carries out the reaction 4-(trimethylamino)butanoyl-CoA + (R)-carnitine = (R)-carnitinyl-CoA + 4-(trimethylamino)butanoate. It participates in amine and polyamine metabolism; carnitine metabolism. Catalyzes the reversible transfer of the CoA moiety from gamma-butyrobetainyl-CoA to L-carnitine to generate L-carnitinyl-CoA and gamma-butyrobetaine. Is also able to catalyze the reversible transfer of the CoA moiety from gamma-butyrobetainyl-CoA or L-carnitinyl-CoA to crotonobetaine to generate crotonobetainyl-CoA. This Escherichia fergusonii (strain ATCC 35469 / DSM 13698 / CCUG 18766 / IAM 14443 / JCM 21226 / LMG 7866 / NBRC 102419 / NCTC 12128 / CDC 0568-73) protein is L-carnitine CoA-transferase.